The following is a 513-amino-acid chain: V-type proton ATPase subunit B, kidney isoform (513 aa).

Residues 1 to 18 (MATTVDSRSSGFTGNSCD) show a composition bias toward polar residues. A disordered region spans residues 1 to 21 (MATTVDSRSSGFTGNSCDPGT). Arginine 394 provides a ligand contact to ATP. The PDZ-binding signature appears at 510–513 (DTAL).

It belongs to the ATPase alpha/beta chains family. In terms of assembly, V-ATPase is a heteromultimeric enzyme made up of two complexes: the ATP-hydrolytic V1 complex and the proton translocation V0 complex. The V1 complex consists of three catalytic AB heterodimers that form a heterohexamer, three peripheral stalks each consisting of EG heterodimers, one central rotor including subunits D and F, and the regulatory subunits C and H. The proton translocation complex V0 consists of the proton transport subunit a, a ring of proteolipid subunits c9c'', rotary subunit d, subunits e and f, and the accessory subunits ATP6AP1/Ac45 and ATP6AP2/PRR. Forms a complex with NHERF1 and SCL4A7. Highly expressed in the kidney; found in early distal nephron, encompassing thick ascending limbs and distal convoluted tubules and in the alpha-intercalated cells of the cortical collecting ducts (at protein level). Expressed in the olfactory epithelium (at protein level). Expressed at lower levels in the testis.

It is found in the apical cell membrane. The protein resides in the basolateral cell membrane. Non-catalytic subunit of the V1 complex of vacuolar(H+)-ATPase (V-ATPase), a multisubunit enzyme composed of a peripheral complex (V1) that hydrolyzes ATP and a membrane integral complex (V0) that translocates protons. V-ATPase is responsible for acidifying and maintaining the pH of intracellular compartments and in some cell types, is targeted to the plasma membrane, where it is responsible for acidifying the extracellular environment. Essential for the proper assembly and activity of V-ATPase. In renal intercalated cells, mediates secretion of protons (H+) into the urine thereby ensuring correct urinary acidification. Required for optimal olfactory function by mediating the acidification of the nasal olfactory epithelium. The polypeptide is V-type proton ATPase subunit B, kidney isoform (Atp6v1b1) (Mus musculus (Mouse)).